The primary structure comprises 514 residues: Peptide chain release factor 3 (514 aa).

Positions 8-268 (KKRRTFAIIS…TFLEFAPEPH (261 aa)) constitute a tr-type G domain. GTP contacts are provided by residues 17–24 (SHPDAGKT), 85–89 (DTPGH), and 139–142 (NKLD).

This sequence belongs to the TRAFAC class translation factor GTPase superfamily. Classic translation factor GTPase family. PrfC subfamily.

The protein resides in the cytoplasm. Functionally, increases the formation of ribosomal termination complexes and stimulates activities of RF-1 and RF-2. It binds guanine nucleotides and has strong preference for UGA stop codons. It may interact directly with the ribosome. The stimulation of RF-1 and RF-2 is significantly reduced by GTP and GDP, but not by GMP. This is Peptide chain release factor 3 from Streptococcus pyogenes serotype M5 (strain Manfredo).